Reading from the N-terminus, the 565-residue chain is MEPKTKKQRSLYIPYAGPVLLEFPLLNKGSAFSMEERRNFNLLGLLPEVVETIEEQAERAWIQYQGFKTEIDKHIYLRNIQDTNETLFYRLVNNHLDEMMPVIYTPTVGAACERFSEIYRRSRGVFISYQNRHNMDDILQNVPNHNIKVIVVTDGERILGLGDQGIGGMGIPIGKLSLYTACGGISPAYTLPVVLDVGTNNQQLLNDPLYMGWRNPRITDDEYYEFVDEFIQAVKQRWPDVLLQFEDFAQKNAMPLLNRYRNEICSFNDDIQGTAAVTVGTLIAASRAAGGQLSEKKIVFLGAGSAGCGIAEMIIAQTQREGLSEETARQKVFMVDRFGLLTDKMPNLLPFQTKLVQKRENLSDWDTDSDVLSLLDVVRNVKPDILIGVSGQTGLFTEEIIREMHKHCPRPIVMPLSNPTSRVEATPQDIIAWTEGNALVATGSPFNPVVWKDKIYPIAQCNNAFIFPGIGLGVIASGASRITDEMLMSASETLAQYSPLVLNGEGLVLPELKDIQKVSRAIAFAVGKMAQQQGVAVKTSAEALQQAIDDNFWQAEYRDYRRTSI.

Tyrosine 104 acts as the Proton donor in catalysis. Arginine 157 serves as a coordination point for NAD(+). The active-site Proton acceptor is lysine 175. Positions 246, 247, and 270 each coordinate a divalent metal cation. NAD(+) is bound by residues aspartate 270 and asparagine 418.

It belongs to the malic enzymes family. Homotetramer. The cofactor is Mg(2+). It depends on Mn(2+) as a cofactor.

The enzyme catalyses (S)-malate + NAD(+) = pyruvate + CO2 + NADH. The catalysed reaction is oxaloacetate + H(+) = pyruvate + CO2. This is NAD-dependent malic enzyme from Escherichia coli (strain SMS-3-5 / SECEC).